We begin with the raw amino-acid sequence, 333 residues long: Mitochondrial glycine transporter (333 aa).

Solcar repeat units follow at residues 10 to 93 (SKST…IRQS), 125 to 209 (LSNT…GKKR), and 235 to 319 (HAAS…LIRR). A run of 2 helical transmembrane segments spans residues 16–41 (FAAGLGSGVLSAVLLQPIDLLKTRVQ) and 68–94 (GAVPSALRTGFGSAIYFTSLNAIRQSA). A disordered region spans residues 98 to 126 (SPLPSSSSSTTTSSSTTTSSSSSSLPKLS). 4 consecutive transmembrane segments (helical) span residues 131 to 156 (LLAGAAARSLAGLILMPLTVLKVRYE), 184 to 207 (GYGATAVRDAPYAGLYVLFYEQGK), 239 to 265 (INFASGVLAGVICSVVSNPFDAVKTRI), and 294 to 312 (GLALRMSRKAVSSALAWTV).

The protein belongs to the mitochondrial carrier (TC 2.A.29) family. SLC25A38 subfamily.

The protein localises to the mitochondrion inner membrane. It carries out the reaction glycine(in) = glycine(out). In terms of biological role, mitochondrial glycine transporter that imports glycine into the mitochondrial matrix. Plays an important role in providing glycine for the first enzymatic step in heme biosynthesis, the condensation of glycine with succinyl-CoA to produce 5-aminolevulinate (ALA) in the mitochondrial matrix. The polypeptide is Mitochondrial glycine transporter (Chaetomium globosum (strain ATCC 6205 / CBS 148.51 / DSM 1962 / NBRC 6347 / NRRL 1970) (Soil fungus)).